Consider the following 160-residue polypeptide: 6,7-dimethyl-8-ribityllumazine synthase (160 aa).

5-amino-6-(D-ribitylamino)uracil contacts are provided by residues Phe23, 61-63 (SFE), and 85-87 (AVI). A (2S)-2-hydroxy-3-oxobutyl phosphate-binding site is contributed by 90 to 91 (DT). The active-site Proton donor is His93. Phe118 provides a ligand contact to 5-amino-6-(D-ribitylamino)uracil. Position 132 (Arg132) interacts with (2S)-2-hydroxy-3-oxobutyl phosphate.

It belongs to the DMRL synthase family.

It catalyses the reaction (2S)-2-hydroxy-3-oxobutyl phosphate + 5-amino-6-(D-ribitylamino)uracil = 6,7-dimethyl-8-(1-D-ribityl)lumazine + phosphate + 2 H2O + H(+). Its pathway is cofactor biosynthesis; riboflavin biosynthesis; riboflavin from 2-hydroxy-3-oxobutyl phosphate and 5-amino-6-(D-ribitylamino)uracil: step 1/2. Catalyzes the formation of 6,7-dimethyl-8-ribityllumazine by condensation of 5-amino-6-(D-ribitylamino)uracil with 3,4-dihydroxy-2-butanone 4-phosphate. This is the penultimate step in the biosynthesis of riboflavin. The protein is 6,7-dimethyl-8-ribityllumazine synthase of Synechococcus sp. (strain CC9311).